A 169-amino-acid polypeptide reads, in one-letter code: Succinate dehydrogenase cytochrome b560 subunit, mitochondrial (169 aa).

Residues M1–P29 constitute a mitochondrion transit peptide. Topologically, residues L30–M65 are mitochondrial matrix. The helical transmembrane segment at A66 to L90 threads the bilayer. The Mitochondrial intermembrane segment spans residues L91–P110. The chain crosses the membrane as a helical span at residues A111–L139. H127 contributes to the heme b binding site. Over G140–P146 the chain is Mitochondrial matrix. Residues Q147–A167 traverse the membrane as a helical segment. The Mitochondrial intermembrane segment spans residues A168–M169.

It belongs to the cytochrome b560 family. As to quaternary structure, component of complex II composed of four subunits: the flavoprotein (FP) SDHA, iron-sulfur protein (IP) SDHB, and a cytochrome b560 composed of SDHC and SDHD. Heme b is required as a cofactor.

Its subcellular location is the mitochondrion inner membrane. It functions in the pathway carbohydrate metabolism; tricarboxylic acid cycle. Functionally, membrane-anchoring subunit of succinate dehydrogenase (SDH) that is involved in complex II of the mitochondrial electron transport chain and is responsible for transferring electrons from succinate to ubiquinone (coenzyme Q). SDH also oxidizes malate to the non-canonical enol form of oxaloacetate, enol-oxaloacetate. Enol-oxaloacetate, which is a potent inhibitor of the succinate dehydrogenase activity, is further isomerized into keto-oxaloacetate. This chain is Succinate dehydrogenase cytochrome b560 subunit, mitochondrial (SDHC), found in Homo sapiens (Human).